Here is a 50-residue protein sequence, read N- to C-terminus: Putative protein HokG (50 aa).

The helical transmembrane segment at 5 to 25 (YALVAIIVLCCTVLGFTLMVG) threads the bilayer.

The protein belongs to the Hok/Gef family.

The protein localises to the cell inner membrane. Functionally, toxic component of a type I toxin-antitoxin (TA) system. When overexpressed kills cells within minutes; causes collapse of the transmembrane potential and arrest of respiration. Its toxic effect is probably neutralized by an antisense antitoxin Sok RNA. This is Putative protein HokG (hokG) from Escherichia coli O157:H7.